The chain runs to 497 residues: Guanosine-5'-triphosphate,3'-diphosphate pyrophosphatase (497 aa).

The protein belongs to the GppA/Ppx family. GppA subfamily.

The enzyme catalyses guanosine 3'-diphosphate 5'-triphosphate + H2O = guanosine 3',5'-bis(diphosphate) + phosphate + H(+). It participates in purine metabolism; ppGpp biosynthesis; ppGpp from GTP: step 2/2. Functionally, catalyzes the conversion of pppGpp to ppGpp. Guanosine pentaphosphate (pppGpp) is a cytoplasmic signaling molecule which together with ppGpp controls the 'stringent response', an adaptive process that allows bacteria to respond to amino acid starvation, resulting in the coordinated regulation of numerous cellular activities. This chain is Guanosine-5'-triphosphate,3'-diphosphate pyrophosphatase, found in Aliivibrio fischeri (strain MJ11) (Vibrio fischeri).